Here is a 193-residue protein sequence, read N- to C-terminus: Probable GTP-binding protein EngB (193 aa).

The EngB-type G domain maps to 22-193 (MYPEISFIGR…ELWQIIEDLL (172 aa)). Residues 30–37 (GRSNVGKS), 57–61 (GKTRT), 75–78 (DLPG), 142–145 (TKMD), and 174–176 (FSS) contribute to the GTP site. Mg(2+) is bound by residues Ser-37 and Thr-59.

Belongs to the TRAFAC class TrmE-Era-EngA-EngB-Septin-like GTPase superfamily. EngB GTPase family. Mg(2+) serves as cofactor.

Necessary for normal cell division and for the maintenance of normal septation. This is Probable GTP-binding protein EngB from Natranaerobius thermophilus (strain ATCC BAA-1301 / DSM 18059 / JW/NM-WN-LF).